The following is a 440-amino-acid chain: Chromosome partition protein MukF (440 aa).

The leucine-zipper stretch occupies residues leucine 208–isoleucine 236.

Belongs to the MukF family. Interacts, and probably forms a ternary complex, with MukE and MukB via its C-terminal region. The complex formation is stimulated by calcium or magnesium. It is required for an interaction between MukE and MukB.

It is found in the cytoplasm. It localises to the nucleoid. Involved in chromosome condensation, segregation and cell cycle progression. May participate in facilitating chromosome segregation by condensation DNA from both sides of a centrally located replisome during cell division. Not required for mini-F plasmid partitioning. Probably acts via its interaction with MukB and MukE. Overexpression results in anucleate cells. It has a calcium binding activity. This chain is Chromosome partition protein MukF, found in Yersinia enterocolitica serotype O:8 / biotype 1B (strain NCTC 13174 / 8081).